The following is a 146-amino-acid chain: Acidic phospholipase A2 2 (146 aa).

The N-terminal stretch at 1–21 (MNPAHLLILAAVCVSSLGASS) is a signal peptide. Positions 22–27 (NRPMPL) are excised as a propeptide. 7 disulfide bridges follow: cysteine 38–cysteine 98, cysteine 53–cysteine 145, cysteine 55–cysteine 71, cysteine 70–cysteine 126, cysteine 77–cysteine 119, cysteine 87–cysteine 112, and cysteine 105–cysteine 117. 3 residues coordinate Ca(2+): tyrosine 54, glycine 56, and glycine 58. Histidine 74 is a catalytic residue. Aspartate 75 contributes to the Ca(2+) binding site. The active site involves aspartate 120.

Belongs to the phospholipase A2 family. Group I subfamily. D49 sub-subfamily. Ca(2+) is required as a cofactor. In terms of tissue distribution, expressed by the venom gland.

It is found in the secreted. It carries out the reaction a 1,2-diacyl-sn-glycero-3-phosphocholine + H2O = a 1-acyl-sn-glycero-3-phosphocholine + a fatty acid + H(+). In terms of biological role, PLA2 catalyzes the calcium-dependent hydrolysis of the 2-acyl groups in 3-sn-phosphoglycerides. In Naja kaouthia (Monocled cobra), this protein is Acidic phospholipase A2 2.